A 236-amino-acid chain; its full sequence is UPF0502 protein BceJ2315_62050 (236 aa).

Belongs to the UPF0502 family.

This chain is UPF0502 protein BceJ2315_62050, found in Burkholderia cenocepacia (strain ATCC BAA-245 / DSM 16553 / LMG 16656 / NCTC 13227 / J2315 / CF5610) (Burkholderia cepacia (strain J2315)).